Reading from the N-terminus, the 68-residue chain is Prokaryotic ubiquitin-like protein Pup (68 aa).

The segment at 1-37 is disordered; the sequence is MAQERIFGTGSRREDEPDTPAPVDPPVSGAAQAQRDM. Residues 24-62 form an ARC ATPase binding region; that stretch reads DPPVSGAAQAQRDMQGTDDLLAEIDGVLETNAEAFVKGF. Deamidated glutamine is present on glutamine 68. Glutamine 68 is covalently cross-linked (Isoglutamyl lysine isopeptide (Gln-Lys) (interchain with K-? in acceptor proteins)).

The protein belongs to the prokaryotic ubiquitin-like protein family. Strongly interacts with the proteasome-associated ATPase ARC through a hydrophobic interface; the interacting region of Pup lies in its C-terminal half. There is one Pup binding site per ARC hexamer ring. In terms of processing, is modified by deamidation of its C-terminal glutamine to glutamate by the deamidase Dop, a prerequisite to the subsequent pupylation process.

Its pathway is protein degradation; proteasomal Pup-dependent pathway. Functionally, protein modifier that is covalently attached to lysine residues of substrate proteins, thereby targeting them for proteasomal degradation. The tagging system is termed pupylation. The polypeptide is Prokaryotic ubiquitin-like protein Pup (Kocuria rhizophila (strain ATCC 9341 / DSM 348 / NBRC 103217 / DC2201)).